Reading from the N-terminus, the 73-residue chain is uncharacterized protein (73 aa).

The disordered stretch occupies residues 48–73 (AKEPEKKTPSMEAKATSLSPNKASAS). The span at 63–73 (TSLSPNKASAS) shows a compositional bias: polar residues.

This is an uncharacterized protein from Saccharomyces cerevisiae (strain ATCC 204508 / S288c) (Baker's yeast).